A 503-amino-acid polypeptide reads, in one-letter code: Cytochrome P450 11B1, mitochondrial (503 aa).

A mitochondrion-targeting transit peptide spans 1 to 24; that stretch reads MALWAKARVWMAGPWLSLHRARPL. Cysteine 450 contacts heme.

The protein belongs to the cytochrome P450 family. Requires heme as cofactor.

Its subcellular location is the mitochondrion inner membrane. It carries out the reaction a steroid + 2 reduced [adrenodoxin] + O2 + 2 H(+) = an 11beta-hydroxysteroid + 2 oxidized [adrenodoxin] + H2O. It catalyses the reaction 11-deoxycortisol + 2 reduced [adrenodoxin] + O2 + 2 H(+) = cortisol + 2 oxidized [adrenodoxin] + H2O. The enzyme catalyses 21-hydroxyprogesterone + 2 reduced [adrenodoxin] + O2 + 2 H(+) = corticosterone + 2 oxidized [adrenodoxin] + H2O. The catalysed reaction is corticosterone + 2 reduced [adrenodoxin] + O2 + 2 H(+) = 18-hydroxycorticosterone + 2 oxidized [adrenodoxin] + H2O. It carries out the reaction 18-hydroxycorticosterone + 2 reduced [adrenodoxin] + O2 + 2 H(+) = aldosterone + 2 oxidized [adrenodoxin] + 2 H2O. It catalyses the reaction 21-hydroxyprogesterone + 2 reduced [adrenodoxin] + O2 + 2 H(+) = 19-hydroxy-11-deoxycorticosterone + 2 oxidized [adrenodoxin] + H2O. The enzyme catalyses 19-hydroxy-11-deoxycorticosterone + 2 reduced [adrenodoxin] + O2 + 2 H(+) = 19-oxo-11-deoxycorticosterone + 2 oxidized [adrenodoxin] + 2 H2O. It participates in steroid biosynthesis; glucocorticoid biosynthesis. The protein operates within steroid hormone biosynthesis. Its function is as follows. A cytochrome P450 monooxygenase that catalyzes the biosynthesis of aldosterone and other adrenal corticoids. Differing from other species (such as human, rat and mice), it is able to catalyze three sequential oxidative reactions of 11-deoxycorticosterone (21-hydroxyprogesterone), namely 11-beta hydroxylation, followed by two successive oxidations at C18 yielding 18-hydroxy and then 18-oxo intermediates, and ending with the formation of aldosterone. Steroid 11beta, 18- and 19-hydroxylase. Mechanistically, uses molecular oxygen inserting one oxygen atom into a substrate and reducing the second into a water molecule. Two electrons are provided by NADPH via a two-protein mitochondrial transfer system comprising flavoprotein FDXR (adrenodoxin/ferredoxin reductase) and nonheme iron-sulfur protein FDX1 or FDX2 (adrenodoxin/ferredoxin). The protein is Cytochrome P450 11B1, mitochondrial (CYP11B1) of Ovis aries (Sheep).